A 74-amino-acid chain; its full sequence is Large ribosomal subunit protein bL31 (74 aa).

Positions 16, 18, 38, and 41 each coordinate Zn(2+).

It belongs to the bacterial ribosomal protein bL31 family. Type A subfamily. In terms of assembly, part of the 50S ribosomal subunit. Zn(2+) serves as cofactor.

Functionally, binds the 23S rRNA. This Salinispora arenicola (strain CNS-205) protein is Large ribosomal subunit protein bL31.